The chain runs to 1333 residues: Inner capsid protein VP1 (1333 aa).

A compositionally biased stretch (polar residues) spans 1 to 10; it reads MHSTTNNSNK. The disordered stretch occupies residues 1-93; that stretch reads MHSTTNNSNK…MDMEKAAETT (93 aa). Positions 11–20 are enriched in basic and acidic residues; the sequence is RNNEEKHKQP. The span at 64–82 shows a compositional bias: polar residues; the sequence is DGASRSGTNAKVATASSAR.

This sequence belongs to the turreted BTV-fold inner capsid family. As to quaternary structure, homodecamer; each decamer is made up of two conformers of VP2, called VP2A and VP2B. 12 homodecamers assemble to form an icosahedral capsid.

The protein localises to the virion. Inner capsid protein that self-assembles to form an icosahedral capsid with a T=2 symmetry, which consists of 120 copies of VP2, with channels at each of its five-fold vertices. This capsid constitutes the innermost concentric layer of the viral mature particle. The polypeptide is Inner capsid protein VP1 (S1) (Lymantria dispar cypovirus 1 (isolate Rao) (LdCPV-1)).